Here is a 236-residue protein sequence, read N- to C-terminus: Small ribosomal subunit protein uS2c (236 aa).

The protein belongs to the universal ribosomal protein uS2 family.

It is found in the plastid. The protein resides in the chloroplast. This is Small ribosomal subunit protein uS2c (rps2) from Chloranthus spicatus (Chulantree).